We begin with the raw amino-acid sequence, 60 residues long: Small, acid-soluble spore protein C2 (60 aa).

It belongs to the alpha/beta-type SASP family. Post-translationally, SASP are degraded in the first minutes of spore germination and provide amino acids for both new protein synthesis and metabolism.

Its function is as follows. SASP are bound to spore DNA. They are double-stranded DNA-binding proteins that cause DNA to change to an a-like conformation. They protect the DNA backbone from chemical and enzymatic cleavage and are thus involved in dormant spore's high resistance to UV light. In Clostridium perfringens (strain 13 / Type A), this protein is Small, acid-soluble spore protein C2 (sspC2).